The chain runs to 263 residues: Endonuclease 8 (263 aa).

Pro-2 serves as the catalytic Schiff-base intermediate with DNA. Catalysis depends on Glu-3, which acts as the Proton donor. Lys-53 (proton donor; for beta-elimination activity) is an active-site residue. Gln-70, Arg-125, and Asn-169 together coordinate DNA. The FPG-type zinc finger occupies 229-263 (KVFHRDGELCERCGGIIEKTTLSSRPFYWCPGCQH). Arg-253 (proton donor; for delta-elimination activity) is an active-site residue.

The protein belongs to the FPG family. It depends on Zn(2+) as a cofactor.

The catalysed reaction is 2'-deoxyribonucleotide-(2'-deoxyribose 5'-phosphate)-2'-deoxyribonucleotide-DNA = a 3'-end 2'-deoxyribonucleotide-(2,3-dehydro-2,3-deoxyribose 5'-phosphate)-DNA + a 5'-end 5'-phospho-2'-deoxyribonucleoside-DNA + H(+). Involved in base excision repair of DNA damaged by oxidation or by mutagenic agents. Acts as a DNA glycosylase that recognizes and removes damaged bases. Has a preference for oxidized pyrimidines, such as thymine glycol, 5,6-dihydrouracil and 5,6-dihydrothymine. Has AP (apurinic/apyrimidinic) lyase activity and introduces nicks in the DNA strand. Cleaves the DNA backbone by beta-delta elimination to generate a single-strand break at the site of the removed base with both 3'- and 5'-phosphates. The polypeptide is Endonuclease 8 (Escherichia coli (strain 55989 / EAEC)).